Here is a 252-residue protein sequence, read N- to C-terminus: Cell division protein ZapD (252 aa).

Belongs to the ZapD family. Interacts with FtsZ.

It is found in the cytoplasm. Functionally, cell division factor that enhances FtsZ-ring assembly. Directly interacts with FtsZ and promotes bundling of FtsZ protofilaments, with a reduction in FtsZ GTPase activity. The polypeptide is Cell division protein ZapD (Ralstonia nicotianae (strain ATCC BAA-1114 / GMI1000) (Ralstonia solanacearum)).